A 212-amino-acid chain; its full sequence is N-(5'-phosphoribosyl)anthranilate isomerase (212 aa).

It belongs to the TrpF family.

It carries out the reaction N-(5-phospho-beta-D-ribosyl)anthranilate = 1-(2-carboxyphenylamino)-1-deoxy-D-ribulose 5-phosphate. It functions in the pathway amino-acid biosynthesis; L-tryptophan biosynthesis; L-tryptophan from chorismate: step 3/5. This is N-(5'-phosphoribosyl)anthranilate isomerase from Myxococcus xanthus (strain DK1622).